The primary structure comprises 443 residues: Minovincinine 19-hydroxy-O-acetyltransferase (443 aa).

The Proton acceptor role is filled by His-157. Residues 215–222 (RKRFLFSP) carry the Nuclear localization signal motif. Residues 316-343 (TKLVIGELRKAKDKLKNLSQEKLNYVAR) adopt a coiled-coil conformation. Residue Asp-384 is the Proton acceptor of the active site.

This sequence belongs to the plant acyltransferase family. As to quaternary structure, monomer. Expressed in cortical cells of the root tip, especially in hairy roots, as well as in etiolated seedlings. Mostly expressed in roots, and, at lower levels, in leaves.

The protein localises to the cytoplasm. Its subcellular location is the nucleus. It carries out the reaction (+)-minovincinine + acetyl-CoA = (+)-echitovenine + CoA. It participates in alkaloid biosynthesis. Component of the monoterpenoid indole alkaloids (MIAs, e.g. echitovenine, tabersonine, lochnericine, 19-hydroxytabersonine and horhammericine) biosynthetic pathway; MIAs are used in cancer treatment and other medical applications. Acyltransferase catalyzing the conversion of (+)-minovincinine to (+)-echitovenine. In Catharanthus roseus (Madagascar periwinkle), this protein is Minovincinine 19-hydroxy-O-acetyltransferase.